We begin with the raw amino-acid sequence, 308 residues long: NADH-cytochrome b5 reductase 1 (308 aa).

A helical transmembrane segment spans residues 10-27 (INGVYIPSALLIFGTTII). In terms of domain architecture, FAD-binding FR-type spans 59 to 164 (TEFQNFVLKD…RGPKGAMVYT (106 aa)). FAD is bound by residues 144-159 (TTLRIGDKMKVRGPKG) and 170-207 (HIGMIAGGTGITPMLQVIKAIIKGRPRNGGNDTTQIDL).

Belongs to the flavoprotein pyridine nucleotide cytochrome reductase family. As to quaternary structure, monomer. Component of the 2-(3-amino-3-carboxypropyl)histidine synthase complex composed of DPH1, DPH2, DPH3 and a NADH-dependent reductase, predominantly CBR1. FAD serves as cofactor.

The protein resides in the mitochondrion outer membrane. It carries out the reaction 2 Fe(III)-[cytochrome b5] + NADH = 2 Fe(II)-[cytochrome b5] + NAD(+) + H(+). It catalyses the reaction 2 Fe(3+)-[Dph3] + NADH = 2 Fe(2+)-[Dph3] + NAD(+) + H(+). Its pathway is protein modification; peptidyl-diphthamide biosynthesis. NADH-dependent reductase for DPH3 and cytochrome b5. Required for the first step of diphthamide biosynthesis, a post-translational modification of histidine which occurs in elongation factor 2. DPH1 and DPH2 transfer a 3-amino-3-carboxypropyl (ACP) group from S-adenosyl-L-methionine (SAM) to a histidine residue, the reaction is assisted by a reduction system comprising DPH3 and a NADH-dependent reductase, predominantly CBR1. By reducing DPH3, also involved in the formation of the tRNA wobble base modification mcm5s 2U (5-methoxycarbonylmethyl-2-thiouridine), mediated by the elongator complex. The cytochrome b5/NADH cytochrome b5 reductase electron transfer system supports the catalytic activity of several sterol biosynthetic enzymes. This is NADH-cytochrome b5 reductase 1 (CBR1) from Coccidioides immitis (strain RS) (Valley fever fungus).